A 225-amino-acid polypeptide reads, in one-letter code: Phosphoenolpyruvate guanylyltransferase (225 aa).

Phosphoenolpyruvate contacts are provided by Thr150, Gly166, and Ser169. Positions 167–186 are disordered; that stretch reads PESARGHANSGARPLNGQWP.

Belongs to the CofC family.

It catalyses the reaction phosphoenolpyruvate + GTP + H(+) = enolpyruvoyl-2-diphospho-5'-guanosine + diphosphate. The protein operates within cofactor biosynthesis; coenzyme F420 biosynthesis. Functionally, guanylyltransferase that catalyzes the activation of phosphoenolpyruvate (PEP) as enolpyruvoyl-2-diphospho-5'-guanosine, via the condensation of PEP with GTP. It is involved in the biosynthesis of coenzyme F420, a hydride carrier cofactor. The polypeptide is Phosphoenolpyruvate guanylyltransferase (Rhodococcus erythropolis (strain PR4 / NBRC 100887)).